Consider the following 340-residue polypeptide: Adenosine kinase (340 aa).

D293 is an active-site residue.

Belongs to the carbohydrate kinase PfkB family. Mg(2+) serves as cofactor.

It catalyses the reaction adenosine + ATP = AMP + ADP + H(+). The protein operates within purine metabolism; AMP biosynthesis via salvage pathway; AMP from adenosine: step 1/1. Its function is as follows. ATP dependent phosphorylation of adenosine and other related nucleoside analogs to monophosphate derivatives. ADO1 does not play a major role in adenine utilization in yeast. Its physiological role could primarily be to recycle adenosine produced by the methyl cycle. The protein is Adenosine kinase of Saccharomyces cerevisiae (strain ATCC 204508 / S288c) (Baker's yeast).